Here is a 218-residue protein sequence, read N- to C-terminus: Cytochrome c biogenesis ATP-binding export protein CcmA (218 aa).

Residues 12-217 (LHAEQLSSIR…KLSLEYRGEV (206 aa)) form the ABC transporter domain. Residue 44–51 (GPNGAGKS) coordinates ATP.

The protein belongs to the ABC transporter superfamily. CcmA exporter (TC 3.A.1.107) family. In terms of assembly, the complex is composed of two ATP-binding proteins (CcmA) and two transmembrane proteins (CcmB).

Its subcellular location is the cell inner membrane. The enzyme catalyses heme b(in) + ATP + H2O = heme b(out) + ADP + phosphate + H(+). Functionally, part of the ABC transporter complex CcmAB involved in the biogenesis of c-type cytochromes; once thought to export heme, this seems not to be the case, but its exact role is uncertain. Responsible for energy coupling to the transport system. This Idiomarina loihiensis (strain ATCC BAA-735 / DSM 15497 / L2-TR) protein is Cytochrome c biogenesis ATP-binding export protein CcmA.